Here is a 479-residue protein sequence, read N- to C-terminus: Ribosomal RNA small subunit methyltransferase F (479 aa).

S-adenosyl-L-methionine is bound by residues 125–131 (AAAPGSK), Glu-149, Asp-176, and Asp-194. The Nucleophile role is filled by Cys-247.

Belongs to the class I-like SAM-binding methyltransferase superfamily. RsmB/NOP family.

It localises to the cytoplasm. The enzyme catalyses cytidine(1407) in 16S rRNA + S-adenosyl-L-methionine = 5-methylcytidine(1407) in 16S rRNA + S-adenosyl-L-homocysteine + H(+). Its function is as follows. Specifically methylates the cytosine at position 1407 (m5C1407) of 16S rRNA. The chain is Ribosomal RNA small subunit methyltransferase F from Salmonella typhi.